A 121-amino-acid chain; its full sequence is uncharacterized protein (121 aa).

The N-terminal stretch at 1 to 31 (MILNNKGFIRILEATIAGIMVILVFSYLVMS) is a signal peptide.

The protein to B.burgdorferi BB0465 N-terminal region.

This is an uncharacterized protein from Methanocaldococcus jannaschii (strain ATCC 43067 / DSM 2661 / JAL-1 / JCM 10045 / NBRC 100440) (Methanococcus jannaschii).